The sequence spans 72 residues: Teretoxin Tsu11.2 (72 aa).

A signal peptide spans 1–21 (MMAKATMAFCFLLMLTTVMLP). Residues 22–30 (TEGKTIAGR) constitute a propeptide that is removed on maturation.

Belongs to the teretoxin H (TH) superfamily. Contains 4 disulfide bonds. As to expression, expressed by the venom duct.

The protein resides in the secreted. This is Teretoxin Tsu11.2 from Terebra subulata (Chocolate spotted auger).